Here is a 471-residue protein sequence, read N- to C-terminus: V-type ATP synthase beta chain (471 aa).

Belongs to the ATPase alpha/beta chains family.

Produces ATP from ADP in the presence of a proton gradient across the membrane. The V-type beta chain is a regulatory subunit. The polypeptide is V-type ATP synthase beta chain (Streptococcus pyogenes serotype M28 (strain MGAS6180)).